We begin with the raw amino-acid sequence, 351 residues long: SH3 domain-containing protein 3 (351 aa).

2 coiled-coil regions span residues 1–21 (MDAFRRQASKLRDQVAKQQLA) and 193–213 (LQLAEAKMQELKANMAVLGKE). A BAR domain is found at 31–267 (YESSDVMVID…MVTEKQHKES (237 aa)). In terms of domain architecture, SH3 spans 281–340 (TSYFLAEVIHPFSAASEKELDLDKGDYIVVRKVSQTGWAEGECKGKAGWFPMAYIEKRQR).

Interacts with FREE1. Interacts (via SH3 domain) with DRP2A/ADL6. Binds to SH3P2. As to expression, detected in all tissues except seedlings.

It is found in the cytoplasmic vesicle. Its subcellular location is the clathrin-coated vesicle. Functionally, may be involved in the recruitment of DRP2A to the accessory protein complex and in the negative regulation of its GTPase activity. The chain is SH3 domain-containing protein 3 from Arabidopsis thaliana (Mouse-ear cress).